Here is a 1270-residue protein sequence, read N- to C-terminus: Nuclear exosome regulator NRDE2 (1270 aa).

Disordered regions lie at residues 1-22 (MFRAYGNNGLKNPERISGENPD) and 119-209 (SVKS…HTLM). A compositionally biased stretch (polar residues) spans 119–135 (SVKSLNGCQDPPETSQQ). Residues 164 to 184 (QRSRSREKKRRKKERRRKRSS) show a composition bias toward basic residues. Basic and acidic residues predominate over residues 192–204 (RSRDRSSRARDTS).

Belongs to the NRDE2 family. Interacts with nrde-3.

It localises to the nucleus. The protein resides in the nucleus speckle. It is found in the nucleolus. Its function is as follows. Protein of the nuclear speckles that regulates RNA exosomal degradation. Involved in short interfering RNAs-mediated silencing in nuclei. Functions with nrde-3 in the nuclear RNA-mediated gene silencing (RNAi) pathway to regulate gene expression via inhibition of RNA polymerases I and II during the elongation phase of transcription. Required for exogenous RNAi-induced H3K27 methylation. The sequence is that of Nuclear exosome regulator NRDE2 (nrde-2) from Caenorhabditis elegans.